Reading from the N-terminus, the 331-residue chain is Hydroxysteroid dehydrogenase-like protein 1 (331 aa).

Residues 2–82 form a required for mitochondria translocation region; that stretch reads AAVDRFNLLY…TGSTDGIGKA (81 aa). Residues 74–80 and Asp125 each bind NADP(+); that span reads GSTDGIG. Ser205 is a substrate binding site. Tyr218 serves as the catalytic Proton acceptor. Residue Lys222 participates in NADP(+) binding.

This sequence belongs to the short-chain dehydrogenases/reductases (SDR) family. 17-beta-HSD 3 subfamily.

It localises to the mitochondrion. In terms of biological role, may catalyze the metabolism of steroid hormones and thus play an important role in sex differentiation, the emergence and maintenance of the secondary sexual characters, and the regulation of endocrine. The chain is Hydroxysteroid dehydrogenase-like protein 1 (HSDL1) from Gallus gallus (Chicken).